A 977-amino-acid chain; its full sequence is Poly [ADP-ribose] polymerase 1 (977 aa).

PARP-type zinc fingers lie at residues 8-91 (WKAE…GSAP) and 104-179 (CTIE…KKDA). Zn(2+)-binding residues include C20, C23, H52, C55, C116, C119, H141, and C144. Disordered stretches follow at residues 177–199 (KDAP…QNDI) and 218–237 (DKGK…DLQE). Residues 227 to 365 (DSNANSSDLQ…AKKPERVLPP (139 aa)) form the PADR1 zinc-binding domain. One can recognise an SAP domain in the interval 254-288 (KKHVSTAELRNMLEANGQDTSGPERHLLDRCADGM). Residues 291-335 (GALGTCPVCSSFLYYHGGQYHCSGYVSEWSKCTYSTTEPVRSKKK) form a zinc ribbon region. 4 residues coordinate Zn(2+): C296, C299, C312, and C322. In terms of domain architecture, BRCT spans 381-473 (SFLSEGLDKL…RVLPFDLYKV (93 aa)). Positions 504 to 604 (TGHILEDGKS…TNFQKQPGKF (101 aa)) constitute a WGR domain. In terms of domain architecture, PARP alpha-helical spans 626–745 (KSSLPPQLLE…DIEIASKLVG (120 aa)). Positions 752 to 977 (ESLDDKYKKL…LLKVRFHHKR (226 aa)) constitute a PARP catalytic domain.

Belongs to the ARTD/PARP family.

It localises to the nucleus. The enzyme catalyses NAD(+) + (ADP-D-ribosyl)n-acceptor = nicotinamide + (ADP-D-ribosyl)n+1-acceptor + H(+).. It carries out the reaction L-aspartyl-[protein] + NAD(+) = 4-O-(ADP-D-ribosyl)-L-aspartyl-[protein] + nicotinamide. The catalysed reaction is L-glutamyl-[protein] + NAD(+) = 5-O-(ADP-D-ribosyl)-L-glutamyl-[protein] + nicotinamide. Its function is as follows. Involved in the base excision repair (BER) pathway, by catalyzing the poly(ADP-ribosyl)ation of a limited number of acceptor proteins involved in chromatin architecture and in DNA metabolism. This modification follows DNA damages and appears as an obligatory step in a detection/signaling pathway leading to the reparation of DNA strand breaks. The sequence is that of Poly [ADP-ribose] polymerase 1 (PARP1) from Oryza sativa subsp. japonica (Rice).